The chain runs to 405 residues: Nicotinate phosphoribosyltransferase (405 aa).

Histidine 224 bears the Phosphohistidine; by autocatalysis mark.

The protein belongs to the NAPRTase family. Post-translationally, transiently phosphorylated on a His residue during the reaction cycle. Phosphorylation strongly increases the affinity for substrates and increases the rate of nicotinate D-ribonucleotide production. Dephosphorylation regenerates the low-affinity form of the enzyme, leading to product release.

The enzyme catalyses nicotinate + 5-phospho-alpha-D-ribose 1-diphosphate + ATP + H2O = nicotinate beta-D-ribonucleotide + ADP + phosphate + diphosphate. The protein operates within cofactor biosynthesis; NAD(+) biosynthesis; nicotinate D-ribonucleotide from nicotinate: step 1/1. Its function is as follows. Catalyzes the synthesis of beta-nicotinate D-ribonucleotide from nicotinate and 5-phospho-D-ribose 1-phosphate at the expense of ATP. The protein is Nicotinate phosphoribosyltransferase of Methanococcoides burtonii (strain DSM 6242 / NBRC 107633 / OCM 468 / ACE-M).